Here is a 320-residue protein sequence, read N- to C-terminus: Ferrochelatase (320 aa).

Fe cation contacts are provided by H194 and E275.

Belongs to the ferrochelatase family. As to quaternary structure, monomer.

The protein localises to the cytoplasm. It carries out the reaction heme b + 2 H(+) = protoporphyrin IX + Fe(2+). Its pathway is porphyrin-containing compound metabolism; protoheme biosynthesis; protoheme from protoporphyrin-IX: step 1/1. Its function is as follows. Catalyzes the ferrous insertion into protoporphyrin IX. This chain is Ferrochelatase, found in Salmonella paratyphi A (strain ATCC 9150 / SARB42).